The sequence spans 432 residues: MKFDVVIIGGGLAGLTCGIMLQQKGKCCAIINNGQSAMNFSSGSMDLLSQLPNGEKINSFEQGYDSLEEQLPNHPYCLFGKQHVLQKAKQFEQLIEKINLNVTGSYKQNHFRVTPLGGLHRTWLSADCIPTMDLHDEHFGYQKITVLGIEGYHDFQPHLLAENLIQHPQFTHCSITTALLHLPELDQLRLTSREFRSVNISQLLEHRLAFRELVQEIKQASGDGEAIFLPACFGLDNQDFFNKLTLETGLNLYELPTLPPSLVGLRQHKKLKTYFEKLGGFILNGDKALRAVIEDQQVKQIYTQLHQEHGIFAEHFVLASGSFFSNGLVSVFDRLLEPIFDVDMIGNSMIDIQNRLTWTARRFSSPQPYQSAGVAINSCCQLKKSGQIIKNLYAAGNVIGGYNALELGCGSGVAVVTALTVADNIIEAQNRV.

It belongs to the anaerobic G-3-P dehydrogenase subunit B family. In terms of assembly, composed of a catalytic GlpA/B dimer and of membrane bound GlpC. FMN serves as cofactor.

The catalysed reaction is a quinone + sn-glycerol 3-phosphate = dihydroxyacetone phosphate + a quinol. It functions in the pathway polyol metabolism; glycerol degradation via glycerol kinase pathway; glycerone phosphate from sn-glycerol 3-phosphate (anaerobic route): step 1/1. Functionally, conversion of glycerol 3-phosphate to dihydroxyacetone. Uses fumarate or nitrate as electron acceptor. The polypeptide is Anaerobic glycerol-3-phosphate dehydrogenase subunit B (Histophilus somni (strain 129Pt) (Haemophilus somnus)).